The chain runs to 447 residues: Probable glycine dehydrogenase (decarboxylating) subunit 1 (447 aa).

This sequence belongs to the GcvP family. N-terminal subunit subfamily. As to quaternary structure, the glycine cleavage system is composed of four proteins: P, T, L and H. In this organism, the P 'protein' is a heterodimer of two subunits.

The enzyme catalyses N(6)-[(R)-lipoyl]-L-lysyl-[glycine-cleavage complex H protein] + glycine + H(+) = N(6)-[(R)-S(8)-aminomethyldihydrolipoyl]-L-lysyl-[glycine-cleavage complex H protein] + CO2. In terms of biological role, the glycine cleavage system catalyzes the degradation of glycine. The P protein binds the alpha-amino group of glycine through its pyridoxal phosphate cofactor; CO(2) is released and the remaining methylamine moiety is then transferred to the lipoamide cofactor of the H protein. The sequence is that of Probable glycine dehydrogenase (decarboxylating) subunit 1 from Macrococcus caseolyticus (strain JCSC5402) (Macrococcoides caseolyticum).